The following is a 396-amino-acid chain: Acyl-[acyl-carrier-protein] desaturase, chloroplastic (396 aa).

The N-terminal 33 residues, Met1 to Met33, are a transit peptide targeting the chloroplast. Fe cation-binding residues include Glu138, Glu176, His179, Glu229, Glu262, and His265.

The protein belongs to the fatty acid desaturase type 2 family. Homodimer. The cofactor is Fe(2+).

Its subcellular location is the plastid. It is found in the chloroplast. It functions in the pathway lipid metabolism; fatty acid metabolism. Functionally, introduces a cis double bond in the acyl chain of an acyl-[acyl-carrier protein]. This Cucumis sativus (Cucumber) protein is Acyl-[acyl-carrier-protein] desaturase, chloroplastic.